We begin with the raw amino-acid sequence, 453 residues long: Ribulose bisphosphate carboxylase large chain (453 aa).

A propeptide spanning residues 1–2 (MS) is cleaved from the precursor. Position 3 is an N-acetylproline (proline 3). The residue at position 14 (lysine 14) is an N6,N6,N6-trimethyllysine. 2 residues coordinate substrate: asparagine 123 and threonine 173. Residue lysine 175 is the Proton acceptor of the active site. Residue lysine 177 participates in substrate binding. 3 residues coordinate Mg(2+): lysine 201, aspartate 203, and glutamate 204. Lysine 201 carries the N6-carboxylysine modification. The Proton acceptor role is filled by histidine 294. Substrate is bound by residues arginine 295, histidine 327, and serine 379.

The protein belongs to the RuBisCO large chain family. Type I subfamily. In terms of assembly, heterohexadecamer of 8 large chains and 8 small chains; disulfide-linked. The disulfide link is formed within the large subunit homodimers. It depends on Mg(2+) as a cofactor. The disulfide bond which can form in the large chain dimeric partners within the hexadecamer appears to be associated with oxidative stress and protein turnover.

It is found in the plastid. It localises to the chloroplast. The catalysed reaction is 2 (2R)-3-phosphoglycerate + 2 H(+) = D-ribulose 1,5-bisphosphate + CO2 + H2O. The enzyme catalyses D-ribulose 1,5-bisphosphate + O2 = 2-phosphoglycolate + (2R)-3-phosphoglycerate + 2 H(+). RuBisCO catalyzes two reactions: the carboxylation of D-ribulose 1,5-bisphosphate, the primary event in carbon dioxide fixation, as well as the oxidative fragmentation of the pentose substrate in the photorespiration process. Both reactions occur simultaneously and in competition at the same active site. The polypeptide is Ribulose bisphosphate carboxylase large chain (Phuopsis stylosa (Caucasian crosswort)).